Reading from the N-terminus, the 103-residue chain is L-rhamnose-binding lectin ELEL-1 (103 aa).

The SUEL-type lectin domain maps to 13 to 102; that stretch reads VCEGSSLTIS…KYLELSYDCS (90 aa). 4 disulfides stabilise this stretch: Cys-14–Cys-45, Cys-23–Cys-101, Cys-56–Cys-88, and Cys-69–Cys-75.

In terms of assembly, homodimer; disulfide-linked. In terms of processing, not glycosylated.

Its function is as follows. Rhamnose-binding lectin. Also binds alpha-D-melibiose, alpha-D-lactose, beta-D-lactose, methyl-alpha-D-galactopyranoside, methyl-beta-D--galactopyranoside and D-galactose but not D-arabinose, L-fucose, D-glucose, D-mannose, D-maltose, D-sucrose, N-acetyl-D-galactosamine, N-acetyl-D-glucosamine, N-acetyl-D-mannosamine-D-xylose or by glycoproteins orosomucoid, thyroglobulin, ovomucoid and porcine stomach mucin. Shows cation-independent hemagglutinating activity against rabbit and human erythrocytes. Agglutinates cells of Gram-positive bacterial species S.aureus but not those of Gram-negative E.coli. This chain is L-rhamnose-binding lectin ELEL-1, found in Echinometra lucunter (Rock-boring urchin).